Consider the following 111-residue polypeptide: Prothymosin alpha (111 aa).

M1 carries the N-acetylmethionine modification. The segment at 1 to 111 (MSDAAVDTSS…TKKQKTEEDD (111 aa)) is disordered. S2 carries the N-acetylserine; in Prothymosin alpha, N-terminally processed modification. S2 is modified (phosphoserine). T8 carries the post-translational modification Phosphothreonine. Phosphoserine is present on residues S9 and S10. A phosphothreonine mark is found at T13 and T14. Over residues 13 to 31 (TTKDLKEKKEVVEEAENGR) the composition is skewed to basic and acidic residues. K15 bears the N6-acetyllysine; alternate mark. N6-succinyllysine; alternate is present on K15. The segment covering 43 to 84 (ENGEQEADNEVDEEEEEGGEEEEEEEEGDGEEEDGDEDEEAE) has biased composition (acidic residues). Residues 101-111 (DTKKQKTEEDD) are compositionally biased toward basic and acidic residues. Residue T102 is modified to Phosphothreonine. Position 103 is an N6-acetyllysine; alternate (K103). K103 participates in a covalent cross-link: Glycyl lysine isopeptide (Lys-Gly) (interchain with G-Cter in SUMO2); alternate. At T107 the chain carries Phosphothreonine.

It belongs to the pro/parathymosin family. As to quaternary structure, interacts with NUPR1; regulates apoptotic process. Post-translationally, covalently linked to a small RNA of about 20 nucleotides.

It is found in the nucleus. Prothymosin alpha may mediate immune function by conferring resistance to certain opportunistic infections. This chain is Prothymosin alpha (Ptma), found in Mus musculus (Mouse).